A 425-amino-acid chain; its full sequence is MSIIEDARHGIVTEEMKQVAKAEGVTEDFIRRSVAEGHIVIPVSPYRKVKICGIGEGLRTKVNASIGTSTDIVNIPEEIEKAKQAERAGADTLMELSTGGDFADIRRQIIANTTLSVGSVPLYQAFIEAVKKDGAVIHMKEDDLFRITAEQAKLGTNFMAIHTGINWETVKRLRNQGRHAGLVSRGGAFMTAWMLHNEKENPLYSEFDYLMEIMKEHEVTLSMGNGMRAGAIHDATDRAGIQELLINAELADKAHAKGIQVIVEGPGHVPIDEIATNVQLMKRVTNNKPFYMLGPIVTDIAPGYDDRVSAIGAAISSSLGADFICYVTPAEHLALPTPEEVYEGVISSRIAAHVGDMVKLKKVREADLEMGHARRDLDWERQFAVAMNPARARKIREERMPADTDGCTMCGDFCAIKIVNRYFKF.

Residues M94, Y123, H162, S184–G186, N225–R228, and E264 each bind substrate. H268 provides a ligand contact to Zn(2+). Y291 contacts substrate. H332 lines the Zn(2+) pocket. Positions 407, 410, and 414 each coordinate [4Fe-4S] cluster.

Belongs to the ThiC family. [4Fe-4S] cluster serves as cofactor.

The enzyme catalyses 5-amino-1-(5-phospho-beta-D-ribosyl)imidazole + S-adenosyl-L-methionine = 4-amino-2-methyl-5-(phosphooxymethyl)pyrimidine + CO + 5'-deoxyadenosine + formate + L-methionine + 3 H(+). It functions in the pathway cofactor biosynthesis; thiamine diphosphate biosynthesis. Functionally, catalyzes the synthesis of the hydroxymethylpyrimidine phosphate (HMP-P) moiety of thiamine from aminoimidazole ribotide (AIR) in a radical S-adenosyl-L-methionine (SAM)-dependent reaction. The chain is Phosphomethylpyrimidine synthase from Methanoregula boonei (strain DSM 21154 / JCM 14090 / 6A8).